A 525-amino-acid chain; its full sequence is GMP synthase [glutamine-hydrolyzing] (525 aa).

The 199-residue stretch at 9–207 (RILILDFGSQ…VLDICGCAAL (199 aa)) folds into the Glutamine amidotransferase type-1 domain. Cys86 serves as the catalytic Nucleophile. Catalysis depends on residues His181 and Glu183. The GMPS ATP-PPase domain occupies 208–400 (WTPSNIVDDA…LGLPYDMVYR (193 aa)). 235–241 (SGGVDSS) lines the ATP pocket.

Homodimer.

It carries out the reaction XMP + L-glutamine + ATP + H2O = GMP + L-glutamate + AMP + diphosphate + 2 H(+). It functions in the pathway purine metabolism; GMP biosynthesis; GMP from XMP (L-Gln route): step 1/1. Its function is as follows. Catalyzes the synthesis of GMP from XMP. This chain is GMP synthase [glutamine-hydrolyzing], found in Pseudomonas aeruginosa (strain LESB58).